The sequence spans 707 residues: Prolyl endopeptidase-like (707 aa).

Residues serine 538, aspartate 624, and histidine 670 each act as charge relay system in the active site.

This sequence belongs to the peptidase S9A family. As to quaternary structure, homodimer.

Its subcellular location is the cytoplasm. The protein resides in the cytosol. In terms of biological role, serine peptidase whose precise substrate specificity remains unclear. Does not cleave peptides after a arginine or lysine residue. Regulates trans-Golgi network morphology and sorting by regulating the membrane binding of the AP-1 complex. May play a role in the regulation of synaptic vesicle exocytosis. This is Prolyl endopeptidase-like (prepl) from Xenopus laevis (African clawed frog).